Here is a 797-residue protein sequence, read N- to C-terminus: Striatin-3 (797 aa).

Methionine 1 carries the post-translational modification N-acetylmethionine. Gly residues-rich tracts occupy residues 1–12 (MDELAGGGGGGP) and 33–43 (GGNGAAGGGGP). Residues 1-60 (MDELAGGGGGGPAMASPPRQQQGPGGNMSLSPGGNGAAGGGGPPATEGAGPAAGPELSRP) form a disordered region. Low complexity predominate over residues 44 to 55 (PATEGAGPAAGP). Positions 71–79 (YIQHEWARF) are caveolin-binding. The stretch at 77–136 (ARFEMERAHWEVERAELQARIAFLQGERKGQENLKKDLVRRIKMLEYALKQERAKYHKLK) forms a coiled coil. At threonine 150 the chain carries Phosphothreonine. The segment at 166–183 (QNSQLTWKQGRQLLRQYL) is calmodulin-binding. Residues serine 202, serine 214, serine 229, serine 257, and serine 335 each carry the phosphoserine modification. Residues 313 to 336 (DGEGAGEARSSGDGTEWDKDDLSP) form a disordered region. WD repeat units follow at residues 478 to 517 (SHFD…PAKK), 531 to 570 (AHIG…VDPY), 584 to 623 (AHTD…PCIC), 679 to 718 (QSSN…MIHS), 721 to 760 (AHLD…CVQE), and 767 to 796 (KLDE…AKVF).

Belongs to the WD repeat striatin family. In terms of assembly, tetramerizes. Part of the core of STRIPAK complexes composed of PP2A catalytic and scaffolding subunits, the striatins (PP2A regulatory subunits), the striatin-associated proteins MOB4, STRIP1 and STRIP2, PDCD10 and members of the STE20 kinases, such as STK24 and STK26. The STRIPAK complex can be extended by adapter proteins such as SLMAP:SIKE1 or CTTNBP2NL. Interacts with CDC42BPB.

Its subcellular location is the cytoplasm. The protein localises to the membrane. In terms of biological role, calmodulin-binding scaffolding protein which is the center of the striatin-interacting phosphatase and kinase (STRIPAK) complexes. STRIPAK complexes have critical roles in protein (de)phosphorylation and are regulators of multiple signaling pathways including Hippo, MAPK, nuclear receptor and cytoskeleton remodeling. Different types of STRIPAK complexes are involved in a variety of biological processes such as cell growth, differentiation, apoptosis, metabolism and immune regulation. In Bos taurus (Bovine), this protein is Striatin-3 (STRN3).